A 316-amino-acid polypeptide reads, in one-letter code: Lys-63-specific deubiquitinase BRCC36 (316 aa).

An N-acetylalanine modification is found at Ala-2. Positions 12–179 (VHLESDAFLV…YTCFQSIQAQ (168 aa)) constitute an MPN domain. Residues His-122, His-124, and Asp-135 each contribute to the Zn(2+) site. The JAMM motif motif lies at 122–135 (HSHPHITVWPSHVD). Residue Ser-258 is modified to Phosphoserine.

Belongs to the peptidase M67A family. BRCC36 subfamily. As to quaternary structure, component of the ARISC complex, at least composed of UIMC1/RAP80, ABRAXAS1, BRCC3/BRCC36, BABAM2 and BABAM1/NBA1. Component of the BRCA1-A complex, at least composed of BRCA1, BARD1, UIMC1/RAP80, ABRAXAS1, BRCC3/BRCC36, babam2 and BABAM1/NBA1. In the BRCA1-A complex, interacts directly with ABRAXAS1 and babam2. Component of the BRISC complex, at least composed of ABRAXAS2, BRCC3/BRCC36, BABAM2 and BABAM1/NBA1. Identified in a complex with SHMT2 and the other subunits of the BRISC complex. In the BRISC complex, interacts directly with ABRAXAS2. Identified in a complex with ABRAXAS2 and NUMA1. The BRISC complex interacts with the CSN complex. Component of the BRCA1/BRCA2 containing complex (BRCC), which also contains BRCA1, BRCA2, BARD1, BABAM2 and RAD51. BRCC is a ubiquitin E3 ligase complex that enhances cellular survival following DNA damage. Interacts with BRCA1. Binds polyubiquitin. Interacts with PWWP2B. Interacts with HDAC1; this interaction is enhanced in the presence of PWWP2B. Zn(2+) is required as a cofactor. Heart, brain, placenta, lung, liver, skeletal muscle, kidney and pancreas. Aberrantly expressed in the vast majority of breast tumors.

Its subcellular location is the nucleus. The protein resides in the cytoplasm. The protein localises to the cytoskeleton. It localises to the spindle pole. Functionally, metalloprotease that specifically cleaves 'Lys-63'-linked polyubiquitin chains. Does not have activity toward 'Lys-48'-linked polyubiquitin chains. Component of the BRCA1-A complex, a complex that specifically recognizes 'Lys-63'-linked ubiquitinated histones H2A and H2AX at DNA lesions sites, leading to target the BRCA1-BARD1 heterodimer to sites of DNA damage at double-strand breaks (DSBs). In the BRCA1-A complex, it specifically removes 'Lys-63'-linked ubiquitin on histones H2A and H2AX, antagonizing the RNF8-dependent ubiquitination at double-strand breaks (DSBs). Catalytic subunit of the BRISC complex, a multiprotein complex that specifically cleaves 'Lys-63'-linked ubiquitin in various substrates. Mediates the specific 'Lys-63'-specific deubiquitination associated with the COP9 signalosome complex (CSN), via the interaction of the BRISC complex with the CSN complex. The BRISC complex is required for normal mitotic spindle assembly and microtubule attachment to kinetochores via its role in deubiquitinating NUMA1. Plays a role in interferon signaling via its role in the deubiquitination of the interferon receptor IFNAR1; deubiquitination increases IFNAR1 activity by enhancing its stability and cell surface expression. Acts as a regulator of the NLRP3 inflammasome by mediating deubiquitination of NLRP3, leading to NLRP3 inflammasome assembly. Down-regulates the response to bacterial lipopolysaccharide (LPS) via its role in IFNAR1 deubiquitination. Deubiquitinates HDAC1 and PWWP2B leading to their stabilization. In Homo sapiens (Human), this protein is Lys-63-specific deubiquitinase BRCC36 (BRCC3).